Reading from the N-terminus, the 156-residue chain is Small ribosomal subunit protein uS7 (156 aa).

The protein belongs to the universal ribosomal protein uS7 family. Part of the 30S ribosomal subunit. Contacts proteins S9 and S11.

In terms of biological role, one of the primary rRNA binding proteins, it binds directly to 16S rRNA where it nucleates assembly of the head domain of the 30S subunit. Is located at the subunit interface close to the decoding center, probably blocks exit of the E-site tRNA. This is Small ribosomal subunit protein uS7 from Buchnera aphidicola subsp. Cinara cedri (strain Cc).